We begin with the raw amino-acid sequence, 394 residues long: Enoyl-[acyl-carrier-protein] reductase [NADH] (394 aa).

Residues 48–53 (GASTGY), 74–75 (YE), 111–112 (DA), and 139–140 (LA) contribute to the NAD(+) site. Tyr-225 serves as a coordination point for substrate. Tyr-235 acts as the Proton donor in catalysis. NAD(+) contacts are provided by residues Lys-244 and 273-275 (LVT).

This sequence belongs to the TER reductase family. In terms of assembly, monomer.

The enzyme catalyses a 2,3-saturated acyl-[ACP] + NAD(+) = a (2E)-enoyl-[ACP] + NADH + H(+). It functions in the pathway lipid metabolism; fatty acid biosynthesis. In terms of biological role, involved in the final reduction of the elongation cycle of fatty acid synthesis (FAS II). Catalyzes the reduction of a carbon-carbon double bond in an enoyl moiety that is covalently linked to an acyl carrier protein (ACP). The sequence is that of Enoyl-[acyl-carrier-protein] reductase [NADH] from Opitutus terrae (strain DSM 11246 / JCM 15787 / PB90-1).